A 78-amino-acid chain; its full sequence is DNA-directed RNA polymerase subunit Rpo5 (78 aa).

It belongs to the archaeal Rpo5/eukaryotic RPB5 RNA polymerase subunit family. In terms of assembly, part of the RNA polymerase complex.

The protein resides in the cytoplasm. It catalyses the reaction RNA(n) + a ribonucleoside 5'-triphosphate = RNA(n+1) + diphosphate. DNA-dependent RNA polymerase (RNAP) catalyzes the transcription of DNA into RNA using the four ribonucleoside triphosphates as substrates. The chain is DNA-directed RNA polymerase subunit Rpo5 from Methanothrix thermoacetophila (strain DSM 6194 / JCM 14653 / NBRC 101360 / PT) (Methanosaeta thermophila).